The chain runs to 258 residues: uncharacterized protein (258 aa).

Residue 36–43 (GKAGTGKS) coordinates ATP.

It belongs to the IIV-6 075L family.

This is an uncharacterized protein from Acheta domesticus (House cricket).